We begin with the raw amino-acid sequence, 305 residues long: CRISPR-associated endonuclease Cas1 (305 aa).

A sufficient for cleavage of ssRNA, ssDNA and Holliday junction DNA region spans residues 96 to 278; that stretch reads SDKLLYQAKL…EDVLAAGEIQ (183 aa). Residues glutamate 141, histidine 208, and aspartate 221 each contribute to the Mg(2+) site. Residues 278–305 form a disordered region; it reads QPPAPPEDAQPVAIPLPVSLGDAGHRSS.

The protein belongs to the CRISPR-associated endonuclease Cas1 family. Homodimer. Part of the Cas1-Cas2 complex. Interacts with RecB, RecC, RuvB, CasC and CasE. Forms a hexamer with 2 Cas1 dimers sandwiching a Cas2 dimer. The DNA lies across a flat surface extending from 1 Cas1 dimer, across the Cas2 dimer and contacting the other Cas1 dimer. Only 1 Cas1 protein from each dimer is catalytic, the other interacts with the Cas2 dimer and possibly target DNA. It depends on Mg(2+) as a cofactor.

Its subcellular location is the cytoplasm. Nuclease activity partially inhibited by CasE. CRISPR (clustered regularly interspaced short palindromic repeat), is an adaptive immune system that provides protection against mobile genetic elements (viruses, transposable elements and conjugative plasmids). CRISPR clusters contain sequences complementary to antecedent mobile elements and target invading nucleic acids. CRISPR clusters are transcribed and processed into CRISPR RNA (crRNA). The Cas1-Cas2 complex is involved in CRISPR adaptation, the first stage of CRISPR immunity, being required for the addition/removal of CRISPR spacers at the leader end of the CRISPR locus. The Cas1-Cas2 complex introduces staggered nicks into both strands of the CRISPR array near the leader repeat and joins the 5'-ends of the repeat strands with the 3'-ends of the new spacer sequence. Spacer DNA integration requires supercoiled target DNA and 3'-OH ends on the inserted (spacer) DNA and probably initiates with a nucleophilic attack of the C 3'-OH end of the protospacer on the minus strand of the first repeat sequence. Expression of Cas1-Cas2 in a strain lacking both genes permits spacer acquisition. Non-specifically binds DNA; the Cas1-Cas2 complex preferentially binds CRISPR-locus DNA. Highest binding is seen to a dual forked DNA complex with 3'-overhangs and a protospacer-adjacent motif-complement specifically positioned. The protospacer DNA lies across a flat surface extending from 1 Cas1 dimer, across the Cas2 dimer and contacting the other Cas1 dimer; the 23 bp-long ds section of the DNA is bracketed by 1 Tyr-22 from each of the Cas1 dimers. Cas1 cuts within the 3'-overhang, to generate a 33-nucleotide DNA that is probably incorporated into the CRISPR leader by a cut-and-paste mechanism. Cas1 alone endonucleolytically cleaves linear ssRNA, ssDNA and short (34 base) dsDNA as well as branched DNA substrates such as Holliday junctions, replication forks and 5'-flap DNA substrates. In vitro catalyzes a concerted transesterification reaction on branched DNA, as would be expected during integration of protospacers into the CRISPR leader sequence; Cas2 is not required in vitro. This reaction requires a 3'-OH group at the branch point. Genetic interactions suggest Cas1 interacts with components of the RecBC and RuvB DNA repair systems. This Escherichia coli (strain K12) protein is CRISPR-associated endonuclease Cas1 (ygbT).